The sequence spans 227 residues: Uridylate kinase (227 aa).

9-10 (GS) is an ATP binding site. Gly44 contributes to the UMP binding site. ATP is bound by residues Gly45 and Arg49. Residues Asp66 and 114-120 (TVPGHTT) each bind UMP. Positions 140, 146, and 149 each coordinate ATP.

It belongs to the UMP kinase family. Homohexamer.

It is found in the cytoplasm. It carries out the reaction UMP + ATP = UDP + ADP. It participates in pyrimidine metabolism; CTP biosynthesis via de novo pathway; UDP from UMP (UMPK route): step 1/1. With respect to regulation, inhibited by UTP. Functionally, catalyzes the reversible phosphorylation of UMP to UDP. This chain is Uridylate kinase, found in Natronomonas pharaonis (strain ATCC 35678 / DSM 2160 / CIP 103997 / JCM 8858 / NBRC 14720 / NCIMB 2260 / Gabara) (Halobacterium pharaonis).